We begin with the raw amino-acid sequence, 321 residues long: 2,3,4,5-tetrahydropyridine-2,6-dicarboxylate N-succinyltransferase (321 aa).

Residues Asp166 and Glu183 each contribute to the Mg(2+) site. Catalysis depends on Glu199, which acts as the Acyl-anhydride intermediate. Succinyl-CoA is bound by residues Arg201, Gly216, Ser219, Ala242, 257-258 (EA), Gly265, Lys281, and 294-297 (RRNS).

The protein belongs to the type 2 tetrahydrodipicolinate N-succinyltransferase family. In terms of assembly, homotrimer.

The protein localises to the cytoplasm. The catalysed reaction is (S)-2,3,4,5-tetrahydrodipicolinate + succinyl-CoA + H2O = (S)-2-succinylamino-6-oxoheptanedioate + CoA. It functions in the pathway amino-acid biosynthesis; L-lysine biosynthesis via DAP pathway; LL-2,6-diaminopimelate from (S)-tetrahydrodipicolinate (succinylase route): step 1/3. Its function is as follows. Catalyzes the conversion of the cyclic tetrahydrodipicolinate (THDP) into the acyclic N-succinyl-L-2-amino-6-oxopimelate using succinyl-CoA. This Micrococcus luteus (strain ATCC 4698 / DSM 20030 / JCM 1464 / CCM 169 / CCUG 5858 / IAM 1056 / NBRC 3333 / NCIMB 9278 / NCTC 2665 / VKM Ac-2230) (Micrococcus lysodeikticus) protein is 2,3,4,5-tetrahydropyridine-2,6-dicarboxylate N-succinyltransferase.